Consider the following 300-residue polypeptide: Light-independent protochlorophyllide reductase iron-sulfur ATP-binding protein (300 aa).

Residues 10-15 and lysine 39 contribute to the ATP site; that span reads GIGKST. Serine 14 lines the Mg(2+) pocket. Cysteine 95 and cysteine 129 together coordinate [4Fe-4S] cluster. 180-181 is an ATP binding site; sequence NR.

It belongs to the NifH/BchL/ChlL family. As to quaternary structure, homodimer. Protochlorophyllide reductase is composed of three subunits; ChlL, ChlN and ChlB. The cofactor is [4Fe-4S] cluster.

The protein resides in the plastid. Its subcellular location is the chloroplast. The enzyme catalyses chlorophyllide a + oxidized 2[4Fe-4S]-[ferredoxin] + 2 ADP + 2 phosphate = protochlorophyllide a + reduced 2[4Fe-4S]-[ferredoxin] + 2 ATP + 2 H2O. Its pathway is porphyrin-containing compound metabolism; chlorophyll biosynthesis (light-independent). In terms of biological role, component of the dark-operative protochlorophyllide reductase (DPOR) that uses Mg-ATP and reduced ferredoxin to reduce ring D of protochlorophyllide (Pchlide) to form chlorophyllide a (Chlide). This reaction is light-independent. The L component serves as a unique electron donor to the NB-component of the complex, and binds Mg-ATP. The polypeptide is Light-independent protochlorophyllide reductase iron-sulfur ATP-binding protein (Auxenochlorella protothecoides (Green microalga)).